Here is a 339-residue protein sequence, read N- to C-terminus: Heat-inducible transcription repressor HrcA (339 aa).

The protein belongs to the HrcA family.

In terms of biological role, negative regulator of class I heat shock genes (grpE-dnaK-dnaJ and groELS operons). Prevents heat-shock induction of these operons. The sequence is that of Heat-inducible transcription repressor HrcA from Paraburkholderia xenovorans (strain LB400).